The chain runs to 347 residues: NADH-ubiquinone oxidoreductase chain 2 (347 aa).

The next 11 membrane-spanning stretches (helical) occupy residues 1–21, 25–45, 59–79, 96–116, 122–142, 145–165, 178–198, 200–220, 242–262, 274–294, and 325–345; these read MNPL…SIIL, HWFM…PVLM, YFLT…INLM, LLIT…FWVP, VSLQ…LAVM, IFAS…IMIG, IMAY…IYNP, LMLL…MMFM, VLMM…GFMP, NSVI…FFYM, and LLAP…MFIL.

This sequence belongs to the complex I subunit 2 family. As to quaternary structure, core subunit of respiratory chain NADH dehydrogenase (Complex I) which is composed of 45 different subunits. Interacts with TMEM242.

The protein resides in the mitochondrion inner membrane. It carries out the reaction a ubiquinone + NADH + 5 H(+)(in) = a ubiquinol + NAD(+) + 4 H(+)(out). Functionally, core subunit of the mitochondrial membrane respiratory chain NADH dehydrogenase (Complex I) which catalyzes electron transfer from NADH through the respiratory chain, using ubiquinone as an electron acceptor. Essential for the catalytic activity and assembly of complex I. The protein is NADH-ubiquinone oxidoreductase chain 2 of Myosorex kihaulei (Kihaule's mouse shrew).